A 68-amino-acid chain; its full sequence is Large ribosomal subunit protein uL29 (68 aa).

It belongs to the universal ribosomal protein uL29 family.

The polypeptide is Large ribosomal subunit protein uL29 (Geobacillus sp. (strain WCH70)).